The chain runs to 273 residues: NAD-dependent protein deacylase (273 aa).

The Deacetylase sirtuin-type domain maps to 20 to 272 (RERLRQRIFF…PEFVEKLLKG (253 aa)). 48–67 (GAGISAESGIRTFRAADGLW) provides a ligand contact to NAD(+). Y92 and R95 together coordinate substrate. NAD(+) is bound at residue 129–132 (QNID). The active-site Proton acceptor is H147. Zn(2+)-binding residues include C155 and C174. Residues 214–216 (GTS), 240–242 (NLE), and A258 contribute to the NAD(+) site.

The protein belongs to the sirtuin family. Class III subfamily. It depends on Zn(2+) as a cofactor.

The protein resides in the cytoplasm. It catalyses the reaction N(6)-acetyl-L-lysyl-[protein] + NAD(+) + H2O = 2''-O-acetyl-ADP-D-ribose + nicotinamide + L-lysyl-[protein]. It carries out the reaction N(6)-succinyl-L-lysyl-[protein] + NAD(+) + H2O = 2''-O-succinyl-ADP-D-ribose + nicotinamide + L-lysyl-[protein]. The catalysed reaction is N(6)-(2-hydroxyisobutanoyl)-L-lysyl-[protein] + NAD(+) + H2O = 2''-O-(2-hydroxyisobutanoyl)-ADP-D-ribose + nicotinamide + L-lysyl-[protein]. In terms of biological role, NAD-dependent lysine deacetylase that specifically removes acetyl groups on target proteins. Also acts as a protein-lysine deacylase by mediating protein desuccinylation and de-2-hydroxyisobutyrylation. Modulates the activities of several proteins which are inactive in their acylated form. This is NAD-dependent protein deacylase from Escherichia coli O6:H1 (strain CFT073 / ATCC 700928 / UPEC).